A 596-amino-acid polypeptide reads, in one-letter code: Fumarate reductase (cytochrome) (596 aa).

The first 25 residues, 1-25, serve as a signal peptide directing secretion; it reads MKKMNLAVCIATLMGTAGLMGTAVA. The heme c site is built by histidine 33, cysteine 39, cysteine 42, histidine 43, cysteine 61, cysteine 64, histidine 65, histidine 83, histidine 86, cysteine 93, cysteine 96, histidine 97, alanine 99, histidine 100, cysteine 107, cysteine 110, and histidine 111. The tract at residues 143-596 is flavoprotein-like; that stretch reads ALASAPHDTV…EEAAKYSKKN (454 aa). Alanine 162, glutamate 181, asparagine 189, alanine 194, glycine 195, glycine 196, glycine 303, and aspartate 369 together coordinate FAD. Residue glycine 195 coordinates fumarate. Glycine 195 lines the succinate pocket. Tyrosine 386 contacts heme c. Histidine 390, threonine 402, and glutamate 403 together coordinate succinate. 2 residues coordinate fumarate: threonine 402 and glutamate 403. Catalysis depends on arginine 427, which acts as the Proton donor. Residue histidine 529 participates in fumarate binding. A succinate-binding site is contributed by histidine 529. Positions 530 and 559 each coordinate FAD. Fumarate is bound by residues arginine 569 and glycine 572. 2 residues coordinate succinate: arginine 569 and glycine 572. 2 residues coordinate FAD: alanine 574 and isoleucine 575.

The protein in the C-terminal section; belongs to the FAD-dependent oxidoreductase 2 family. FRD/SDH subfamily. In terms of assembly, monomer. It depends on FAD as a cofactor. Requires heme c as cofactor.

The protein resides in the periplasm. It catalyses the reaction 2 Fe(III)-[cytochrome c] + succinate = fumarate + 2 Fe(II)-[cytochrome c] + 2 H(+). With respect to regulation, mesaconic acid is a competitive inhibitor of fumarate reduction. Functionally, flavocytochrome that catalyzes the reduction of fumarate to succinate. Is essential for fumarate respiration during anaerobic growth, acting as the terminal reductase. Receives electrons from the membrane-bound tetraheme c-type cytochrome CymA. Is essentially unidirectional, catalyzing only fumarate reduction. Cannot reduce nitrite, dimethylsulphoxide, trimethylamine-N-oxide (TMAO) or sulfite. In vitro, can use the artificial electron donor methyl viologen. This chain is Fumarate reductase (cytochrome), found in Shewanella frigidimarina (strain NCIMB 400).